The sequence spans 145 residues: D-aminoacyl-tRNA deacylase (145 aa).

Positions glycine 137–proline 138 match the Gly-cisPro motif, important for rejection of L-amino acids motif.

The protein belongs to the DTD family. As to quaternary structure, homodimer.

The protein localises to the cytoplasm. The catalysed reaction is glycyl-tRNA(Ala) + H2O = tRNA(Ala) + glycine + H(+). It catalyses the reaction a D-aminoacyl-tRNA + H2O = a tRNA + a D-alpha-amino acid + H(+). In terms of biological role, an aminoacyl-tRNA editing enzyme that deacylates mischarged D-aminoacyl-tRNAs. Also deacylates mischarged glycyl-tRNA(Ala), protecting cells against glycine mischarging by AlaRS. Acts via tRNA-based rather than protein-based catalysis; rejects L-amino acids rather than detecting D-amino acids in the active site. By recycling D-aminoacyl-tRNA to D-amino acids and free tRNA molecules, this enzyme counteracts the toxicity associated with the formation of D-aminoacyl-tRNA entities in vivo and helps enforce protein L-homochirality. The polypeptide is D-aminoacyl-tRNA deacylase (Shewanella loihica (strain ATCC BAA-1088 / PV-4)).